The chain runs to 375 residues: Alcohol dehydrogenase 1 (375 aa).

Ser-1 carries the post-translational modification N-acetylserine. Positions 46, 67, 97, 100, 103, 111, and 175 each coordinate Zn(2+). NAD(+) is bound by residues 200 to 205, Asp-224, Lys-229, 293 to 295, and Arg-370; these read GLGGVG and VGV.

The protein belongs to the zinc-containing alcohol dehydrogenase family. Class-I subfamily. Homodimer. Requires Zn(2+) as cofactor.

It localises to the cytoplasm. It catalyses the reaction a primary alcohol + NAD(+) = an aldehyde + NADH + H(+). The catalysed reaction is a secondary alcohol + NAD(+) = a ketone + NADH + H(+). This chain is Alcohol dehydrogenase 1 (ADH1), found in Coturnix japonica (Japanese quail).